A 103-amino-acid polypeptide reads, in one-letter code: Large ribosomal subunit protein bL21 (103 aa).

This sequence belongs to the bacterial ribosomal protein bL21 family. As to quaternary structure, part of the 50S ribosomal subunit. Contacts protein L20.

Its function is as follows. This protein binds to 23S rRNA in the presence of protein L20. In Polynucleobacter necessarius subsp. necessarius (strain STIR1), this protein is Large ribosomal subunit protein bL21.